Reading from the N-terminus, the 213-residue chain is Calcineurin B-like protein 8 (213 aa).

A lipid anchor (N-myristoyl glycine) is attached at G2. 4 EF-hand domains span residues 31-66 (EVEA…RNSN), 67-102 (KKNL…FHPE), 104-139 (PLGD…LLNE), and 148-183 (AVEQ…NPAL). Residues D161, N163, D165, K167, and E172 each coordinate Ca(2+).

This sequence belongs to the calcineurin regulatory subunit family. As to quaternary structure, homodimer. As to expression, expressed at low levels in roots, shoots, culms, leaves and young spikelets.

It is found in the cell membrane. In terms of biological role, acts as a calcium sensor. May function as positive regulator of salt stress responses. CBL proteins interact with CIPK serine-threonine protein kinases. Binding of a CBL protein to the regulatory NAF domain of a CIPK protein lead to the activation of the kinase in a calcium-dependent manner. This Oryza sativa subsp. japonica (Rice) protein is Calcineurin B-like protein 8 (CBL8).